The chain runs to 372 residues: Oxysterol-binding protein 3 (372 aa).

Basic and acidic residues predominate over residues 1 to 10 (MGKSDRKLTE). The tract at residues 1–25 (MGKSDRKLTEENSIENGVKPGKLTE) is disordered.

The protein belongs to the OSBP family.

This is Oxysterol-binding protein 3 (osbC) from Dictyostelium discoideum (Social amoeba).